The chain runs to 142 residues: Transcriptional regulator MraZ (142 aa).

SpoVT-AbrB domains are found at residues A5–E51 and A77–T120.

This sequence belongs to the MraZ family. Forms oligomers.

The protein resides in the cytoplasm. It localises to the nucleoid. This Burkholderia cenocepacia (strain HI2424) protein is Transcriptional regulator MraZ.